Reading from the N-terminus, the 306-residue chain is Putative dihydroorotate dehydrogenase A (fumarate) (306 aa).

FMN contacts are provided by residues Ser-24 and 48–49; that span reads KS. Residues Lys-48, 72 to 76, and Asn-129 contribute to the substrate site; that span reads NAVGL. Asn-129 contributes to the FMN binding site. Cys-132 (nucleophile) is an active-site residue. Lys-167 and Ile-192 together coordinate FMN. 193 to 194 is a substrate binding site; sequence NS. FMN-binding positions include Gly-218 and 244–245; that span reads GG.

This sequence belongs to the dihydroorotate dehydrogenase family. Type 1 subfamily. As to quaternary structure, homodimer. Requires FMN as cofactor.

It localises to the cytoplasm. It catalyses the reaction (S)-dihydroorotate + fumarate = orotate + succinate. Its pathway is pyrimidine metabolism; UMP biosynthesis via de novo pathway. Functionally, catalyzes the conversion of dihydroorotate to orotate with fumarate as the electron acceptor. The polypeptide is Putative dihydroorotate dehydrogenase A (fumarate) (pyrD) (Aeropyrum pernix (strain ATCC 700893 / DSM 11879 / JCM 9820 / NBRC 100138 / K1)).